A 160-amino-acid chain; its full sequence is Ribosomal RNA large subunit methyltransferase H (160 aa).

S-adenosyl-L-methionine is bound by residues Leu-76, Gly-108, and Leu-127 to Trp-132.

This sequence belongs to the RNA methyltransferase RlmH family. Homodimer.

It is found in the cytoplasm. The enzyme catalyses pseudouridine(1915) in 23S rRNA + S-adenosyl-L-methionine = N(3)-methylpseudouridine(1915) in 23S rRNA + S-adenosyl-L-homocysteine + H(+). Functionally, specifically methylates the pseudouridine at position 1915 (m3Psi1915) in 23S rRNA. The protein is Ribosomal RNA large subunit methyltransferase H of Rhizobium etli (strain ATCC 51251 / DSM 11541 / JCM 21823 / NBRC 15573 / CFN 42).